The sequence spans 126 residues: Cytochrome c2 (126 aa).

Positions 17, 20, 21, and 101 each coordinate heme c.

The protein belongs to the cytochrome c family. Binds 1 heme c group covalently per subunit.

The protein localises to the periplasm. In terms of biological role, cytochrome c2 is found mainly in purple, non-sulfur, photosynthetic bacteria where it functions as the electron donor to the oxidized bacteriochlorophyll in the photophosphorylation pathway. However, it may also have a role in the respiratory chain and is found in some non-photosynthetic bacteria. The chain is Cytochrome c2 from Rhodovulum adriaticum (Rhodopseudomonas adriatica).